The following is a 507-amino-acid chain: Interleukin-17 receptor E-like protein (507 aa).

The N-terminal stretch at 1-21 (MLAGQALAFLGLTWGTFQSLA) is a signal peptide.

Its subcellular location is the secreted. The sequence is that of Interleukin-17 receptor E-like protein from Homo sapiens (Human).